The following is a 1756-amino-acid chain: Multifunctional conjugation protein TraI (1756 aa).

The DNA relaxase stretch occupies residues 1-330 (MLSFSVVKSA…TQAIAGLSER (330 aa)). Catalysis depends on Tyr16, which acts as the O-(5'-phospho-DNA)-tyrosine intermediate; for relaxase activity. Tyr17 functions as the Relaxase in the catalytic mechanism. Positions 146, 157, and 159 each coordinate Mg(2+). The DNA helicase I stretch occupies residues 950–1500 (GKEAVTPLME…LRDVAAGRAV (551 aa)). 992–999 (GYAGVGKT) provides a ligand contact to ATP. Residues 1719–1753 (EQEAVREVARENLLQERLQQIERDMVRDLQKEKTL) are a coiled coil.

To TraI of plasmid F. As to quaternary structure, monomer. Part of the relaxosome, a complex composed of plasmid-encodes TraI, TraM, TraY and host-encoded IHF bound to the F plasmid origin of transfer (oriT). Directly contacts coupling protein TraD. Seems to directly contact TraM via its C-terminus. It depends on Mg(2+) as a cofactor.

It localises to the cytoplasm. It carries out the reaction ATP-independent breakage of single-stranded DNA, followed by passage and rejoining.. The enzyme catalyses ATP + H2O = ADP + phosphate + H(+). Conjugative DNA transfer (CDT) is the unidirectional transfer of ssDNA plasmid from a donor to a recipient cell. It is the central mechanism by which antibiotic resistance and virulence factors are propagated in bacterial populations. Part of the relaxosome, which facilitates a site- and strand-specific cut in the origin of transfer by TraI, at the nic site. Relaxosome formation requires binding of IHF and TraY to the oriT region, which then facilitates binding of TraI relaxase. TraI forms a covalent 5'-phosphotyrosine intermediate linkage to the ssDNA. The transesterified T-strand moves from the donor cell to the recipient cell in a 5'to 3' direction, with the DNA helicase activity of TraI unwinding the DNA. DNA transfer occurs via the conjugative pore (transferosome) an intercellular junction mediated by a type IV secretion system, with TraD providing the means to link the relaxosome to the conjugative pore. The relaxase completes DNA transfer by reversing the covalent phosphotyrosine linkage and releasing the T-strand. In terms of biological role, traI has also been identified as DNA helicase I. DNA. helicase I is a potent, highly processive DNA-dependent ATPase, able to unwind about 1.1 kb dsDNA per second in a 5' to 3' manner. The chain is Multifunctional conjugation protein TraI (traI) from Escherichia coli.